The chain runs to 229 residues: Large ribosomal subunit protein uL1 (229 aa).

Belongs to the universal ribosomal protein uL1 family. In terms of assembly, part of the 50S ribosomal subunit.

In terms of biological role, binds directly to 23S rRNA. The L1 stalk is quite mobile in the ribosome, and is involved in E site tRNA release. Its function is as follows. Protein L1 is also a translational repressor protein, it controls the translation of the L11 operon by binding to its mRNA. This chain is Large ribosomal subunit protein uL1, found in Haemophilus influenzae (strain 86-028NP).